Reading from the N-terminus, the 488-residue chain is Ribulose bisphosphate carboxylase large chain (488 aa).

Substrate is bound by residues N127 and T177. K179 acts as the Proton acceptor in catalysis. Position 181 (K181) interacts with substrate. The Mg(2+) site is built by K205, D207, and E208. The residue at position 205 (K205) is an N6-carboxylysine. Residue H297 is the Proton acceptor of the active site. The substrate site is built by R298, H330, and S382.

It belongs to the RuBisCO large chain family. Type I subfamily. As to quaternary structure, heterohexadecamer of 8 large chains and 8 small chains. Mg(2+) is required as a cofactor.

It is found in the plastid. The protein resides in the chloroplast. It catalyses the reaction 2 (2R)-3-phosphoglycerate + 2 H(+) = D-ribulose 1,5-bisphosphate + CO2 + H2O. It carries out the reaction D-ribulose 1,5-bisphosphate + O2 = 2-phosphoglycolate + (2R)-3-phosphoglycerate + 2 H(+). RuBisCO catalyzes two reactions: the carboxylation of D-ribulose 1,5-bisphosphate, the primary event in carbon dioxide fixation, as well as the oxidative fragmentation of the pentose substrate in the photorespiration process. Both reactions occur simultaneously and in competition at the same active site. The sequence is that of Ribulose bisphosphate carboxylase large chain from Guillardia theta (Cryptophyte).